Reading from the N-terminus, the 221-residue chain is Interleukin-12 subunit alpha (221 aa).

The first 25 residues, 1–25, serve as a signal peptide directing secretion; the sequence is MCPLRSLLLISTLVLLHHLPHLSLG. 3 cysteine pairs are disulfide-bonded: cysteine 39–cysteine 112, cysteine 66–cysteine 198, and cysteine 87–cysteine 125. Asparagine 95 carries an N-linked (GlcNAc...) asparagine glycan.

Belongs to the IL-6 superfamily. Heterodimer with IL12B; disulfide-linked. This heterodimer is known as interleukin IL-12. Heterodimer with EBI3/IL27B; not disulfide-linked. This heterodimer is known as interleukin IL-35. Interacts with NBR1; this interaction promotes IL-12 secretion.

Its subcellular location is the secreted. In terms of biological role, heterodimerizes with IL12B to form the IL-12 cytokine or with EBI3/IL27B to form the IL-35 cytokine. IL-12 is primarily produced by professional antigen-presenting cells (APCs) such as B-cells and dendritic cells (DCs) as well as macrophages and granulocytes and regulates T-cell and natural killer-cell responses, induces the production of interferon-gamma (IFN-gamma), favors the differentiation of T-helper 1 (Th1) cells and is an important link between innate resistance and adaptive immunity. Mechanistically, exerts its biological effects through a receptor composed of IL12R1 and IL12R2 subunits. Binding to the receptor results in the rapid tyrosine phosphorylation of a number of cellular substrates including the JAK family kinases TYK2 and JAK2. In turn, recruited STAT4 gets phosphorylated and translocates to the nucleus where it regulates cytokine/growth factor responsive genes. As part of IL-35, plays essential roles in maintaining the immune homeostasis of the liver microenvironment and also functions as an immune-suppressive cytokine. Mediates biological events through unconventional receptors composed of IL12RB2 and gp130/IL6ST heterodimers or homodimers. Signaling requires the transcription factors STAT1 and STAT4, which form a unique heterodimer that binds to distinct DNA sites. The chain is Interleukin-12 subunit alpha (IL12A) from Bos taurus (Bovine).